Here is a 273-residue protein sequence, read N- to C-terminus: Dermonecrotic toxin SdSicTox-betaIF1 (273 aa).

Histidine 5 is a catalytic residue. Glutamate 25 and aspartate 27 together coordinate Mg(2+). Residue histidine 41 is the Nucleophile of the active site. Disulfide bonds link cysteine 45/cysteine 51 and cysteine 47/cysteine 189.

Belongs to the arthropod phospholipase D family. Class II subfamily. The cofactor is Mg(2+). As to expression, expressed by the venom gland.

It is found in the secreted. The enzyme catalyses an N-(acyl)-sphingosylphosphocholine = an N-(acyl)-sphingosyl-1,3-cyclic phosphate + choline. It catalyses the reaction an N-(acyl)-sphingosylphosphoethanolamine = an N-(acyl)-sphingosyl-1,3-cyclic phosphate + ethanolamine. The catalysed reaction is a 1-acyl-sn-glycero-3-phosphocholine = a 1-acyl-sn-glycero-2,3-cyclic phosphate + choline. It carries out the reaction a 1-acyl-sn-glycero-3-phosphoethanolamine = a 1-acyl-sn-glycero-2,3-cyclic phosphate + ethanolamine. Its function is as follows. Dermonecrotic toxins cleave the phosphodiester linkage between the phosphate and headgroup of certain phospholipids (sphingolipid and lysolipid substrates), forming an alcohol (often choline) and a cyclic phosphate. This toxin acts on sphingomyelin (SM). It may also act on ceramide phosphoethanolamine (CPE), lysophosphatidylcholine (LPC) and lysophosphatidylethanolamine (LPE), but not on lysophosphatidylserine (LPS), and lysophosphatidylglycerol (LPG). It acts by transphosphatidylation, releasing exclusively cyclic phosphate products as second products. Induces dermonecrosis, hemolysis, increased vascular permeability, edema, inflammatory response, and platelet aggregation. This is Dermonecrotic toxin SdSicTox-betaIF1 from Sicarius cf. damarensis (strain GJB-2008) (Six-eyed sand spider).